The sequence spans 4334 residues: Cytoplasmic dynein 2 heavy chain 1 (4334 aa).

A stem region spans residues 1–1704 (MSSDSRKTFV…KVAMAEATFD (1704 aa)). 150–157 (LGTAVRKG) is a binding site for ATP. Residues 1026–1097 (QEAKGLTAKL…AHLEEQKGNL (72 aa)) are a coiled coil. 4 AAA regions span residues 1705-1929 (YTWE…VLGI), 1996-2211 (KALA…KAFQ), 2299-2544 (GMDE…WING), and 2641-2882 (GYER…SSGS). ATP is bound by residues 1743 to 1750 (GPAGTGKT), 2034 to 2041 (GPSGSGKS), 2334 to 2341 (GPEGCGKG), and 2679 to 2686 (GNSGVGRR). The tract at residues 2897–3185 (QIYNRKRTQV…ISVDKAESVL (289 aa)) is stalk. 2 coiled-coil regions span residues 2930 to 2998 (LSAE…SEVQ) and 3120 to 3199 (ERVS…RGEK). 2 AAA regions span residues 3260–3492 (LSSE…TVEK) and 3701–3917 (MSSF…VITL).

This sequence belongs to the dynein heavy chain family. The cytoplasmic dynein complex 2 is probably composed by a DHC1B homodimer and a number of D1BLIC light intermediate chains. Interacts with FAP133, FLA10 and LC8.

It is found in the cytoplasm. Its subcellular location is the cytoskeleton. It localises to the flagellum basal body. The protein resides in the cell projection. The protein localises to the cilium. It is found in the flagellum membrane. Functionally, may function as a motor for intraflagellar retrograde transport. Functions in flagellar biogenesis. This is Cytoplasmic dynein 2 heavy chain 1 (DHC1B) from Chlamydomonas reinhardtii (Chlamydomonas smithii).